We begin with the raw amino-acid sequence, 433 residues long: 3-phosphoshikimate 1-carboxyvinyltransferase (433 aa).

Residues K22, S23, and R27 each contribute to the 3-phosphoshikimate site. K22 contacts phosphoenolpyruvate. Residues G96 and R130 each coordinate phosphoenolpyruvate. 3-phosphoshikimate is bound by residues S176, S177, Q178, S204, D319, N342, and K346. Residue Q178 participates in phosphoenolpyruvate binding. The active-site Proton acceptor is the D319. Phosphoenolpyruvate contacts are provided by R350, R394, and K419.

It belongs to the EPSP synthase family. Monomer.

It is found in the cytoplasm. The enzyme catalyses 3-phosphoshikimate + phosphoenolpyruvate = 5-O-(1-carboxyvinyl)-3-phosphoshikimate + phosphate. It participates in metabolic intermediate biosynthesis; chorismate biosynthesis; chorismate from D-erythrose 4-phosphate and phosphoenolpyruvate: step 6/7. Catalyzes the transfer of the enolpyruvyl moiety of phosphoenolpyruvate (PEP) to the 5-hydroxyl of shikimate-3-phosphate (S3P) to produce enolpyruvyl shikimate-3-phosphate and inorganic phosphate. This Actinobacillus succinogenes (strain ATCC 55618 / DSM 22257 / CCUG 43843 / 130Z) protein is 3-phosphoshikimate 1-carboxyvinyltransferase.